Reading from the N-terminus, the 218-residue chain is Ribonuclease HII (218 aa).

The region spanning 23 to 216 (RFLCGVDEAG…VREAIARGLV (194 aa)) is the RNase H type-2 domain. Residues Asp29, Glu30, and Asp125 each contribute to the a divalent metal cation site.

The protein belongs to the RNase HII family. The cofactor is Mn(2+). Requires Mg(2+) as cofactor.

The protein resides in the cytoplasm. It catalyses the reaction Endonucleolytic cleavage to 5'-phosphomonoester.. In terms of biological role, endonuclease that specifically degrades the RNA of RNA-DNA hybrids. In Cupriavidus pinatubonensis (strain JMP 134 / LMG 1197) (Cupriavidus necator (strain JMP 134)), this protein is Ribonuclease HII.